Reading from the N-terminus, the 250-residue chain is 2,3-bisphosphoglycerate-dependent phosphoglycerate mutase (250 aa).

Substrate contacts are provided by residues 12–19 (RHGQSAWN), 25–26 (TG), Arg64, 91–94 (ERHY), Lys102, 118–119 (RR), and 185–186 (GN). His13 acts as the Tele-phosphohistidine intermediate in catalysis. The Proton donor/acceptor role is filled by Glu91.

It belongs to the phosphoglycerate mutase family. BPG-dependent PGAM subfamily.

The catalysed reaction is (2R)-2-phosphoglycerate = (2R)-3-phosphoglycerate. It functions in the pathway carbohydrate degradation; glycolysis; pyruvate from D-glyceraldehyde 3-phosphate: step 3/5. Functionally, catalyzes the interconversion of 2-phosphoglycerate and 3-phosphoglycerate. This chain is 2,3-bisphosphoglycerate-dependent phosphoglycerate mutase, found in Corynebacterium efficiens (strain DSM 44549 / YS-314 / AJ 12310 / JCM 11189 / NBRC 100395).